The primary structure comprises 971 residues: MSNVSEERRKRQQNIKEGLQFIQSPLSYPGTQEQYAVYLRALVRNLFNEGNDVYREHDWNNSISQYTEALNIADYAKSEEILIPKEIIEKLYINRIACYSNMGFHDKVLEDCNIVLSLNASNCKALYRKSKALSDLGRYKKAYDAVAKCSLAVPQDEHVIKLTQELAQKLGFKIRKAYVRAELSLKSVPGDGATKALNHSVEDIEPDLLTPRQEAVPVVSLPAPSFSHEVGSELASVPVMPLTSILPLQVEESALPSAVLANGGKMPFTMPEAFLDDGDMVLGDELDDLLDSAPETNETVMPSALVRGPLQTASVSPSMPFSASLLGTLPIGARYAPPPSFSEFYPPLTSSLEDFCSSLNSFSMSESKRDLSTSTSREGTPLNNSNSSLLLMNGPGSLFASENFLGISSQPRNDFGNFFGSAVTKPSSSVTPRHPLEGTHELRQACQICFVKSGPKLMDFTYHANIDHKCKKDILIGRIKNVEDKSWKKIRPRPTKTNYEGPYYICKDVAAEEECRYSGHCTFAYCQEEIDVWTLERKGAFSREAFFGGNGKINLTVFKLLQEHLGEFIFLCEKCFDHKPRMISKRNKDNSTACSHPVTKHEFEDNKCLVHILRETTVKYSKIRSFHGQCQLDLCRHEVRYGCLREDECFYAHSLVELKVWIMQNETGISHDAIAQESKRYWQNLEANVPGAQVLGNQIMPGFLNMKIKFVCAQCLRNGQVIEPDKNRKYCSAKARHSWTKDRRAMRVMSIERKKWMNIRPLPTKKQMPLQFDLCNHIASGKKCQYVGNCSFAHSPEEREVWTYMKENGIQDMEQFYELWLKSQKNEKSEDIASQSNKENGKQIHMPTDYAEVTVDFHCWMCGKNCNSEKQWQGHISSEKHKEKVFHTEDDQYCWQHRFPTGYFSICDRYMNGTCPEGNSCKFAHGNAELHEWEERRDALKMKLNKARKDHLIGPNDNDFGKYSFLFKDLN.

TPR repeat units lie at residues 43 to 76 (VRNL…ADYA), 89 to 122 (EKLY…NASN), and 124 to 156 (KALY…VPQD). Thr210 is modified (phosphothreonine). 2 consecutive C3H1-type zinc fingers follow at residues 634 to 656 (LCRH…HSLV) and 769 to 797 (PLQF…HSPE). The C2H2-type zinc-finger motif lies at 857 to 881 (FHCWMCGKNCNSEKQWQGHISSEKH). The segment at 906–928 (ICDRYMNGTCPEGNSCKFAHGNA) adopts a C3H1-type 3 zinc-finger fold. A coiled-coil region spans residues 924–952 (AHGNAELHEWEERRDALKMKLNKARKDHL).

The protein resides in the nucleus. May be a specific regulator of miRNA biogenesis. Binds to microRNAs MIR7-1, MIR16-2 and MIR29A hairpins recognizing the 3'-ATA(A/T)-5' motif in the apical loop. The chain is Zinc finger CCCH domain-containing protein 7A (ZC3H7A) from Homo sapiens (Human).